We begin with the raw amino-acid sequence, 525 residues long: Asparagine synthetase [glutamine-hydrolyzing] (525 aa).

The For GATase activity role is filled by cysteine 2. In terms of domain architecture, Glutamine amidotransferase type-2 spans cysteine 2–glycine 185. L-glutamine-binding positions include arginine 50–isoleucine 54, asparagine 75–glutamate 77, and aspartate 98. One can recognise an Asparagine synthetase domain in the interval proline 193–cysteine 517. ATP-binding positions include leucine 231, valine 267, and serine 341 to glycine 342.

The catalysed reaction is L-aspartate + L-glutamine + ATP + H2O = L-asparagine + L-glutamate + AMP + diphosphate + H(+). It functions in the pathway amino-acid biosynthesis; L-asparagine biosynthesis; L-asparagine from L-aspartate (L-Gln route): step 1/1. Its function is as follows. Could play a role in remobilization of nitrogen in flowers during senescence. This Sandersonia aurantiaca (Christmas-bells) protein is Asparagine synthetase [glutamine-hydrolyzing] (AND1).